The sequence spans 553 residues: uncharacterized protein (553 aa).

A signal peptide spans 1 to 31 (MEDIMTSLLVATSRVVVTISLAYVPVKSAFA). S207 serves as the catalytic Acyl-ester intermediate. C275 and C292 are joined by a disulfide. The Ca(2+) site is built by D276, D279, V281, D283, and L285. Residues D444 and H482 each act as charge relay system in the active site. C528 and C550 are disulfide-bonded.

It belongs to the tannase family.

This is an uncharacterized protein from Agrobacterium fabrum (strain C58 / ATCC 33970) (Agrobacterium tumefaciens (strain C58)).